The following is a 253-amino-acid chain: Sulfate transporter CysZ (253 aa).

4 helical membrane-spanning segments follow: residues 31–51, 75–95, 151–171, and 222–242; these read FVIL…WWLF, LLWP…FSTI, IVLL…PVLW, and IPLL…AMWV.

The protein belongs to the CysZ family.

It localises to the cell inner membrane. Functionally, high affinity, high specificity proton-dependent sulfate transporter, which mediates sulfate uptake. Provides the sulfur source for the cysteine synthesis pathway. The protein is Sulfate transporter CysZ of Shigella flexneri serotype 5b (strain 8401).